We begin with the raw amino-acid sequence, 37 residues long: Large ribosomal subunit protein bL36 (37 aa).

The protein belongs to the bacterial ribosomal protein bL36 family.

This chain is Large ribosomal subunit protein bL36, found in Solibacter usitatus (strain Ellin6076).